The primary structure comprises 53 residues: UPF0391 membrane protein PputGB1_0151 (53 aa).

2 helical membrane-spanning segments follow: residues 4-24 and 29-49; these read WAIT…GGIA and GIAK…FFFG.

This sequence belongs to the UPF0391 family.

It is found in the cell membrane. The sequence is that of UPF0391 membrane protein PputGB1_0151 from Pseudomonas putida (strain GB-1).